Consider the following 136-residue polypeptide: Glutaredoxin-C7 (136 aa).

A Glutaredoxin domain is found at 29-135 (LLRIESLASE…PLLKDAGALW (107 aa)). C49 and C52 are oxidised to a cystine. Positions 133–136 (ALWL) match the Responsive for interaction with TGA factors motif.

It belongs to the glutaredoxin family. CC-type subfamily. Interacts with TGA2, TGA3, TGA7 and PAN. Interacts with TGA9 and TGA10 in the nucleus. Highly expressed in inflorescences, roots, and siliques. Expressed at lower levels in mature flowers.

The protein localises to the cytoplasm. Its subcellular location is the nucleus. In terms of biological role, has a glutathione-disulfide oxidoreductase activity in the presence of NADPH and glutathione reductase. Reduces low molecular weight disulfides and proteins. Involved in flower development as a regulator of petal primorida initiation and further petal morphogenesis. May mediate post-translational modifications of target proteins required for normal petal organ initiation and morphogenesis. ROXY1/TGA protein interactions can occur in vivo and support their biological relevance in petal development. May be involved in the regulation of the floral regulator class C gene AG (AGAMOUS). This is Glutaredoxin-C7 (GRXC7) from Arabidopsis thaliana (Mouse-ear cress).